The sequence spans 753 residues: 5-methyltetrahydropteroyltriglutamate--homocysteine methyltransferase (753 aa).

5-methyltetrahydropteroyltri-L-glutamate is bound by residues 17 to 20 (RELK) and Lys117. L-homocysteine is bound by residues 431-433 (IGS) and Glu484. L-methionine-binding positions include 431 to 433 (IGS) and Glu484. Residues 515–516 (RC) and Trp561 contribute to the 5-methyltetrahydropteroyltri-L-glutamate site. Residue Asp599 coordinates L-homocysteine. Position 599 (Asp599) interacts with L-methionine. Glu605 contacts 5-methyltetrahydropteroyltri-L-glutamate. Zn(2+)-binding residues include His641, Cys643, and Glu665. His694 functions as the Proton donor in the catalytic mechanism. Residue Cys726 coordinates Zn(2+).

It belongs to the vitamin-B12 independent methionine synthase family. The cofactor is Zn(2+).

The catalysed reaction is 5-methyltetrahydropteroyltri-L-glutamate + L-homocysteine = tetrahydropteroyltri-L-glutamate + L-methionine. It participates in amino-acid biosynthesis; L-methionine biosynthesis via de novo pathway; L-methionine from L-homocysteine (MetE route): step 1/1. Catalyzes the transfer of a methyl group from 5-methyltetrahydrofolate to homocysteine resulting in methionine formation. The polypeptide is 5-methyltetrahydropteroyltriglutamate--homocysteine methyltransferase (Klebsiella pneumoniae (strain 342)).